Reading from the N-terminus, the 3898-residue chain is Genome polyprotein (3898 aa).

The Peptidase C53 domain maps to 1–168 (MELITNELLY…LDCPLWVTSC (168 aa)). Disordered stretches follow at residues 47-72 (LPHKRGERNVPTSLASLPKRGDCRSG), 172-209 (KEEGATKKKQQKPDRLEKGRMKIVPKESEKDSKTKPPD), and 223-245 (KKGKVKSKNTQDGLYHNKNKPPE). Active-site for N-terminal protease activity residues include His-49 and Cys-69. A compositionally biased stretch (basic and acidic residues) spans 172–207 (KEEGATKKKQQKPDRLEKGRMKIVPKESEKDSKTKP). N-linked (GlcNAc...) asparagine; by host glycosylation is found at Asn-272, Asn-281, Asn-296, and Asn-335. 2 disulfide bridges follow: Cys-308–Cys-352 and Cys-338–Cys-339. Active-site for E(rns) glycoprotein RNase activity residues include His-344, Glu-345, Lys-348, and His-349. N-linked (GlcNAc...) asparagine; by host glycans are attached at residues Asn-365 and Asn-370. 2 disulfides stabilise this stretch: Cys-380/Cys-425 and Cys-384/Cys-408. N-linked (GlcNAc...) asparagine; by host glycans are attached at residues Asn-413, Asn-487, and Asn-597. The Lumenal portion of the chain corresponds to 498-666 (ASPYCDVDRK…WNAATTTAFL (169 aa)). The chain crosses the membrane as a helical span at residues 667–687 (VCLIKMVRGQVVQGILWLLLI). Topologically, residues 688–1035 (TGVQGHLDCK…DHHRDYFAES (348 aa)) are lumenal. Cystine bridges form between Cys-696–Cys-740 and Cys-751–Cys-798. N-linked (GlcNAc...) asparagine; by host glycosylation is found at Asn-809, Asn-878, Asn-922, and Asn-990. 8 helical membrane-spanning segments follow: residues 1036–1056 (ILVVVVALLGGRYVLWLLVTY), 1079–1099 (NLLTHDNVEVVTYFFLLYLLL), 1108–1128 (VLLLYHILVAHPLKSVIVILL), 1144–1164 (LGQIDVCFTMVVIIIIGLIIA), 1189–1209 (PGVDAAMAVITITLLMVSYVT), 1217–1237 (WLQCILSLVSGVFLIRCLIHL), 1247–1267 (IPNWRPLTLILFYLISTTVVT), and 1281–1301 (VPILLLITTLWADFLTLILIL). Asn-1357 is a glycosylation site (N-linked (GlcNAc...) asparagine; by host). Residues 1360 to 1380 (MLLPLVRATLISCVSSKWQLI) form a helical membrane-spanning segment. Asn-1419 is a glycosylation site (N-linked (GlcNAc...) asparagine; by host). The 149-residue stretch at 1441-1589 (RNLIIKHKVR…DLEHLGWILR (149 aa)) folds into the Peptidase C74 domain. His-1447 (for cysteine protease NS2 activity) is an active-site residue. Asn-1451 carries an N-linked (GlcNAc...) asparagine; by host glycan. Active-site for cysteine protease NS2 activity residues include Glu-1461 and Cys-1512. A helical membrane pass occupies residues 1568–1588 (MLMVGNLGEEVGDLEHLGWIL). The region spanning 1590–1763 (GPAVCKKITE…LPIFEASSGR (174 aa)) is the Peptidase S31 domain. Catalysis depends on charge relay system; for serine protease NS3 activity residues His-1658 and Asp-1695. A glycan (N-linked (GlcNAc...) asparagine; by host) is linked at Asn-1713. Ser-1752 acts as the Charge relay system; for serine protease NS3 activity in catalysis. The Helicase ATP-binding domain maps to 1802–1960 (ITSMNRGDFK…QKHPIEEFIA (159 aa)). ATP is bound at residue 1815 to 1822 (LATGAGKT). The DEAH box motif lies at 1910 to 1913 (DEYH). A Helicase C-terminal domain is found at 1978-2143 (GLKIPVDEMK…NVTKSFREMN (166 aa)). N-linked (GlcNAc...) asparagine; by host glycosylation is found at Asn-2134, Asn-2217, Asn-2494, Asn-2682, Asn-2751, Asn-2891, and Asn-2988. GTP is bound by residues Thr-3499 and Leu-3501. The 124-residue stretch at 3518-3641 (PVAVSFDTKA…ITEKGLGLKF (124 aa)) folds into the RdRp catalytic domain. The N-linked (GlcNAc...) asparagine; by host glycan is linked to Asn-3688. Positions 3696 and 3704 each coordinate GTP. Asn-3777 and Asn-3793 each carry an N-linked (GlcNAc...) asparagine; by host glycan.

This sequence belongs to the pestivirus polyprotein family. In terms of assembly, homodimer; disulfide-linked. Homodimer; disulfide-linked. Heterodimer with E1; disulfide-linked. As to quaternary structure, interacts with host IFIH1/MDA5; this interaction is involved in the inhibition of IFN-beta production. In terms of processing, heavily glycosylated. Post-translationally, the viral RNA of pestiviruses is expressed as a single polyprotein which undergoes post-translational proteolytic processing resulting in the production of at least eleven individual proteins. The N-terminal protease cleaves itself from the nascent polyprotein autocatalytically and thereby generates the N-terminus of the adjacent viral capsid protein C. Cleavage between E2 and p7 is partial.

Its subcellular location is the virion. It localises to the host membrane. It is found in the virion membrane. The protein resides in the host endoplasmic reticulum membrane. The protein localises to the host cytoplasm. It catalyses the reaction Leu is conserved at position P1 for all four cleavage sites. Alanine is found at position P1' of the NS4A-NS4B cleavage site, whereas serine is found at position P1' of the NS3-NS4A, NS4B-NS5A and NS5A-NS5B cleavage sites.. It carries out the reaction RNA(n) + a ribonucleoside 5'-triphosphate = RNA(n+1) + diphosphate. The enzyme catalyses a ribonucleoside 5'-triphosphate + H2O = a ribonucleoside 5'-diphosphate + phosphate + H(+). The catalysed reaction is ATP + H2O = ADP + phosphate + H(+). It catalyses the reaction a ribonucleotidyl-ribonucleotide-RNA + H2O = a 3'-end 3'-phospho-ribonucleotide-RNA + a 5'-end dephospho-ribonucleoside-RNA + H(+). It carries out the reaction a ribonucleotidyl-ribonucleotide-RNA = a 3'-end 2',3'-cyclophospho-ribonucleotide-RNA + a 5'-end dephospho-ribonucleoside-RNA. The enzyme catalyses a 3'-end 2',3'-cyclophospho-ribonucleotide-RNA + H2O = a 3'-end 3'-phospho-ribonucleotide-RNA + H(+). Inhibited by Zn(2+), which binds the catalytic site. Its function is as follows. Leader cysteine autoprotease that cleaves itself from the nascent polyprotein during translation of the viral mRNA. Once released, plays a role in the inhibition of host innate immune response by interacting with host IRF3 and inducing its proteasomal degradation. Packages viral RNA to form a viral nucleocapsid and thereby protects viral RNA. Also plays a role in transcription regulation. Protects the incoming virus against IFN-induced effectors. In terms of biological role, initial binding to target cell probably involves interaction of E(rns) with glycosaminoglycans. Also possesses intrinsic ribonuclease (RNase) activity that can inhibit the production of type I interferon and assist in the development of persistent infections. Functionally, E1 and/or E2 are probably responsible of cell attachment with CD46 and subsequent fusion after internalization of the virion by endocytosis. Its function is as follows. E1 and/or E2 are probably responsible of cell attachment with CD46 and subsequent fusion after internalization of the virion by endocytosis. Probably functions as a coeffector of fusion providing structural integrity to the fusion complex and possibly controlling exposure of the fusion motif in E1. Plays an essential role in the virus replication cycle by acting as a viroporin. Forms ion conductive pores, which alters the cell permeability allowing the transport of ions and other small molecules. Forms a leader sequence to properly orient NS2 in the membrane. In terms of biological role, uncleaved NS2-3 is required for production of infectious virus. Functionally, plays a role in the regulation of viral RNA replication. Its function is as follows. Multifunctional protein that contains an N-terminal protease and a C-terminal helicase, playing essential roles in viral polyprotein processing and viral genome replication. The chymotrypsin-like serine protease activity utilizes NS4A as an essential cofactor and catalyzes the cleavage of the polyprotein leading to the release of NS4A, NS4B, NS5A, and NS5B. Interacts with NS5B to enhance RNA-dependent RNA polymerase activity. Acts as a cofactor for the NS3 protease activity. In terms of biological role, induces a specific membrane alteration that serves as a scaffold for the virus replication complex. Plays a role in the inhibition of host innate immune response by inhibiting RIGI/IFIH1-mediated IFN-beta production. Functionally, replicates the viral (+) and (-) genome. Initiates the primer-independent RNA replication via a de novo mechanism requiring GTP. This is Genome polyprotein from Bos taurus (Bovine).